A 1183-amino-acid polypeptide reads, in one-letter code: Rab11 family-interacting protein 3 (1183 aa).

Residues 423 to 448 form a disordered region; the sequence is AEDPSTESLPRKNGQEESKSALPVST. Over residues 431–441 the composition is skewed to basic and acidic residues; that stretch reads LPRKNGQEESK. 2 consecutive EF-hand domains span residues 706 to 741 and 738 to 773; these read EEQS…YGAE and YGAE…ISNE. Residues aspartate 719, aspartate 721, aspartate 723, glutamate 730, aspartate 751, serine 753, and aspartate 762 each contribute to the Ca(2+) site. Residues 902–1121 adopt a coiled-coil conformation; it reads ELEKDSLESE…NGQIINLSIQ (220 aa). Positions 911-1015 are ARF-binding domain (ABD); the sequence is EEQHARLRQE…LQDEADDITQ (105 aa). Positions 1005-1044 are disordered; that stretch reads KLQDEADDITQRLNEESESRRKMSDKLSHERHTNQKEKEC. The 63-residue stretch at 1121 to 1183 folds into the FIP-RBD domain; it reads QGAKSLFTES…ESNPSILEVK (63 aa).

It localises to the recycling endosome membrane. Its subcellular location is the cytoplasm. The protein localises to the cytoskeleton. The protein resides in the microtubule organizing center. It is found in the centrosome. It localises to the cleavage furrow. Its subcellular location is the midbody. The protein localises to the golgi apparatus membrane. The protein resides in the golgi apparatus. It is found in the trans-Golgi network membrane. Functionally, downstream effector molecule for Rab11 GTPase which acts as a regulator of endocytic trafficking, cytokinesis and intracellular ciliogenesis by participating in membrane delivery. This is Rab11 family-interacting protein 3 (rab11fip3) from Danio rerio (Zebrafish).